A 52-amino-acid chain; its full sequence is Keratin-associated protein 19-2 (52 aa).

The protein belongs to the KRTAP type 19 family. Interacts with hair keratins.

In the hair cortex, hair keratin intermediate filaments are embedded in an interfilamentous matrix, consisting of hair keratin-associated proteins (KRTAP), which are essential for the formation of a rigid and resistant hair shaft through their extensive disulfide bond cross-linking with abundant cysteine residues of hair keratins. The matrix proteins include the high-sulfur and high-glycine-tyrosine keratins. The chain is Keratin-associated protein 19-2 (KRTAP19-2) from Homo sapiens (Human).